Here is a 445-residue protein sequence, read N- to C-terminus: tRNA modification GTPase MnmE (445 aa).

Residues Arg24, Glu81, and Lys121 each coordinate (6S)-5-formyl-5,6,7,8-tetrahydrofolate. A TrmE-type G domain is found at 218–369; the sequence is GLTVVIAGPP…LLEALVGFAR (152 aa). Residues 228 to 233, 247 to 253, 272 to 275, and 350 to 352 contribute to the GTP site; these read NAGKST, SPHAGTT, DTAG, and SAR. The Mg(2+) site is built by Ser232 and Thr253. Lys445 serves as a coordination point for (6S)-5-formyl-5,6,7,8-tetrahydrofolate.

The protein belongs to the TRAFAC class TrmE-Era-EngA-EngB-Septin-like GTPase superfamily. TrmE GTPase family. As to quaternary structure, homodimer. Heterotetramer of two MnmE and two MnmG subunits. Requires K(+) as cofactor.

The protein localises to the cytoplasm. Exhibits a very high intrinsic GTPase hydrolysis rate. Involved in the addition of a carboxymethylaminomethyl (cmnm) group at the wobble position (U34) of certain tRNAs, forming tRNA-cmnm(5)s(2)U34. The polypeptide is tRNA modification GTPase MnmE (Bradyrhizobium sp. (strain BTAi1 / ATCC BAA-1182)).